A 261-amino-acid chain; its full sequence is Ribosomal RNA small subunit methyltransferase J (261 aa).

S-adenosyl-L-methionine contacts are provided by residues 109–110 (RD), 125–126 (ER), and Asp179.

It belongs to the methyltransferase superfamily. RsmJ family.

The protein localises to the cytoplasm. It catalyses the reaction guanosine(1516) in 16S rRNA + S-adenosyl-L-methionine = N(2)-methylguanosine(1516) in 16S rRNA + S-adenosyl-L-homocysteine + H(+). In terms of biological role, specifically methylates the guanosine in position 1516 of 16S rRNA. This is Ribosomal RNA small subunit methyltransferase J from Pseudomonas aeruginosa (strain LESB58).